We begin with the raw amino-acid sequence, 622 residues long: 1,4-alpha-glucan branching enzyme GlgB (622 aa).

Asp300 (nucleophile) is an active-site residue. Glu351 acts as the Proton donor in catalysis.

It belongs to the glycosyl hydrolase 13 family. GlgB subfamily. Monomer.

The catalysed reaction is Transfers a segment of a (1-&gt;4)-alpha-D-glucan chain to a primary hydroxy group in a similar glucan chain.. Its pathway is glycan biosynthesis; glycogen biosynthesis. In terms of biological role, catalyzes the formation of the alpha-1,6-glucosidic linkages in glycogen by scission of a 1,4-alpha-linked oligosaccharide from growing alpha-1,4-glucan chains and the subsequent attachment of the oligosaccharide to the alpha-1,6 position. The sequence is that of 1,4-alpha-glucan branching enzyme GlgB from Streptococcus agalactiae serotype III (strain NEM316).